Consider the following 338-residue polypeptide: 4-hydroxythreonine-4-phosphate dehydrogenase (338 aa).

The substrate site is built by histidine 140 and threonine 141. A divalent metal cation-binding residues include histidine 172, histidine 217, and histidine 271. Residues lysine 279, asparagine 288, and arginine 297 each coordinate substrate.

It belongs to the PdxA family. Homodimer. Requires a divalent metal cation as cofactor.

Its subcellular location is the cytoplasm. The enzyme catalyses 4-(phosphooxy)-L-threonine + NAD(+) = 3-amino-2-oxopropyl phosphate + CO2 + NADH. The protein operates within cofactor biosynthesis; pyridoxine 5'-phosphate biosynthesis; pyridoxine 5'-phosphate from D-erythrose 4-phosphate: step 4/5. In terms of biological role, catalyzes the NAD(P)-dependent oxidation of 4-(phosphooxy)-L-threonine (HTP) into 2-amino-3-oxo-4-(phosphooxy)butyric acid which spontaneously decarboxylates to form 3-amino-2-oxopropyl phosphate (AHAP). The polypeptide is 4-hydroxythreonine-4-phosphate dehydrogenase (Prosthecochloris aestuarii (strain DSM 271 / SK 413)).